Consider the following 382-residue polypeptide: Probable G-protein coupled receptor 132 (382 aa).

Residues 1 to 42 are Extracellular-facing; sequence MRSEPTNAAGNTTLGVTSVLQSTSVPSSETCHVSYEESRVVL. Residue asparagine 11 is glycosylated (N-linked (GlcNAc...) asparagine). Residues 43–65 form a helical membrane-spanning segment; that stretch reads VVVYSAVCLLGLPANCLTAWLTL. Topologically, residues 66–76 are cytoplasmic; it reads LQVLQRNVLAV. The chain crosses the membrane as a helical span at residues 77–99; the sequence is YLFCLSLCELLYISTVPLWIIYI. Residues 100 to 113 lie on the Extracellular side of the membrane; sequence QNQHKWNLGPQACK. The cysteines at positions 112 and 184 are disulfide-linked. Residues 114–135 traverse the membrane as a helical segment; that stretch reads VTAYIFFCNIYISILLLCCISC. The Cytoplasmic portion of the chain corresponds to 136–155; it reads DRYMAVVYALESRGHRHQRT. Residues 156–175 form a helical membrane-spanning segment; the sequence is AVTISACVILLVGLVNYPVF. Over 176 to 198 the chain is Extracellular; that stretch reads DMKVEKSFCFEPLRMNSKIAGYH. A helical transmembrane segment spans residues 199–221; it reads YLRFTFGFAIPLGILAFTNHQIF. At 222-241 the chain is on the cytoplasmic side; the sequence is RSIKLSDSLSAAQKNKVKRS. The helical transmembrane segment at 242-261 threads the bilayer; it reads AIAVVTIFLVCFAPYHVVLL. Topologically, residues 262-286 are extracellular; that stretch reads VKAASFSFYQGDMDAVCAFESRLYT. The helical transmembrane segment at 287–309 threads the bilayer; that stretch reads VSMVFLCLSTVNSVADPIIYVLG. Over 310 to 382 the chain is Cytoplasmic; the sequence is TDHSRQEVSR…SPERLPEELC (73 aa).

Belongs to the G-protein coupled receptor 1 family. In terms of tissue distribution, highly expressed in hematopoietic tissues rich in lymphocytes like spleen and thymus. Weakly expressed in heart and lung. Highly expressed in infiltrating macrophages within atherosclerotic lesions.

It is found in the cell membrane. May be a receptor for oxidized free fatty acids derived from linoleic and arachidonic acids such as 9-hydroxyoctadecadienoic acid (9-HODE). Activates a G alpha protein, most likely G alpha(q). May be involved in apoptosis. Functions at the G2/M checkpoint to delay mitosis. May function as a sensor that monitors the oxidative states and mediates appropriate cellular responses such as secretion of paracrine signals and attenuation of proliferation. May mediate ths accumulation of intracellular inositol phosphates at acidic pH through proton-sensing activity. This chain is Probable G-protein coupled receptor 132 (Gpr132), found in Mus musculus (Mouse).